The chain runs to 579 residues: ERV-BabFcenv provirus ancestral Env polyprotein (579 aa).

An N-terminal signal peptide occupies residues 1–22 (MISAVLNLPSTPLLPLLWFTLI). Residues 23–387 (IPASLTNPKF…LSSSNNIQKQ (365 aa)) form a surface protein region. Residues 23–523 (IPASLTNPKF…VWLLPVVQQM (501 aa)) lie on the Extracellular side of the membrane. Residues Asn-135, Asn-203, Asn-242, and Asn-251 are each glycosylated (N-linked (GlcNAc...) asparagine). Residues 255 to 258 (CFLC) carry the CXXC motif. Asn-276, Asn-312, and Asn-337 each carry an N-linked (GlcNAc...) asparagine glycan. A fusion peptide region spans residues 388–408 (AVFLPLIIGVSLASSLVASGL). Residues 388 to 579 (AVFLPLIIGV…LPTSDPNYAP (192 aa)) form a transmembrane protein region. The CKS-17 signature appears at 453 to 469 (AQNRRALDLLTAEKGGT). Cys-470 and Cys-477 are oxidised to a cystine. Positions 470 to 478 (CLFLGEECC) match the CX6CC motif. The N-linked (GlcNAc...) asparagine glycan is linked to Asn-482. Residues 524 to 544 (LPFLIPILILCLMLCLAPILI) traverse the membrane as a helical segment. Residues 545-579 (KFLRARVQEITRVTFNQMLLHPYTQLPTSDPNYAP) lie on the Cytoplasmic side of the membrane.

Belongs to the gamma type-C retroviral envelope protein family. HERV class-I F(c)1 env subfamily. Post-translationally, specific enzymatic cleavages in vivo yield the mature SU and TM proteins. The CXXC motif is highly conserved across a broad range of retroviral envelope proteins. It is thought to participate in the formation of a labile disulfide bond possibly with the CX6CC motif present in the transmembrane domain.

The protein resides in the cell membrane. Its function is as follows. Retroviral envelope proteins mediate receptor recognition and membrane fusion during early infection. Endogenous envelope proteins may have kept, lost or modified their original function during evolution. The chain is ERV-BabFcenv provirus ancestral Env polyprotein from Papio anubis (Olive baboon).